Reading from the N-terminus, the 154-residue chain is Crossover junction endodeoxyribonuclease RuvC (154 aa).

Residues Asp-7, Glu-67, and Asp-139 contribute to the active site. Positions 7, 67, and 139 each coordinate Mg(2+).

The protein belongs to the RuvC family. In terms of assembly, homodimer which binds Holliday junction (HJ) DNA. The HJ becomes 2-fold symmetrical on binding to RuvC with unstacked arms; it has a different conformation from HJ DNA in complex with RuvA. In the full resolvosome a probable DNA-RuvA(4)-RuvB(12)-RuvC(2) complex forms which resolves the HJ. Mg(2+) is required as a cofactor.

It localises to the cytoplasm. The enzyme catalyses Endonucleolytic cleavage at a junction such as a reciprocal single-stranded crossover between two homologous DNA duplexes (Holliday junction).. Its function is as follows. The RuvA-RuvB-RuvC complex processes Holliday junction (HJ) DNA during genetic recombination and DNA repair. Endonuclease that resolves HJ intermediates. Cleaves cruciform DNA by making single-stranded nicks across the HJ at symmetrical positions within the homologous arms, yielding a 5'-phosphate and a 3'-hydroxyl group; requires a central core of homology in the junction. The consensus cleavage sequence is 5'-(A/T)TT(C/G)-3'. Cleavage occurs on the 3'-side of the TT dinucleotide at the point of strand exchange. HJ branch migration catalyzed by RuvA-RuvB allows RuvC to scan DNA until it finds its consensus sequence, where it cleaves and resolves the cruciform DNA. The sequence is that of Crossover junction endodeoxyribonuclease RuvC from Prochlorococcus marinus (strain NATL1A).